The chain runs to 167 residues: Protein YfbM (167 aa).

Monomer.

The polypeptide is Protein YfbM (yfbM) (Escherichia coli (strain K12)).